The following is a 416-amino-acid chain: Queuine tRNA-ribosyltransferase accessory subunit 2 (416 aa).

Zn(2+) is bound by residues Cys-350, Cys-352, Cys-355, and His-381.

This sequence belongs to the queuine tRNA-ribosyltransferase family. QTRT2 subfamily. In terms of assembly, heterodimer of a catalytic subunit qtrt1 and an accessory subunit qtrt2. Zn(2+) serves as cofactor.

It is found in the cytoplasm. It localises to the mitochondrion outer membrane. Non-catalytic subunit of the queuine tRNA-ribosyltransferase (TGT) that catalyzes the base-exchange of a guanine (G) residue with queuine (Q) at position 34 (anticodon wobble position) in tRNAs with GU(N) anticodons (tRNA-Asp, -Asn, -His and -Tyr), resulting in the hypermodified nucleoside queuosine (7-(((4,5-cis-dihydroxy-2-cyclopenten-1-yl)amino)methyl)-7-deazaguanosine). This chain is Queuine tRNA-ribosyltransferase accessory subunit 2, found in Danio rerio (Zebrafish).